The chain runs to 246 residues: 1-(5-phosphoribosyl)-5-[(5-phosphoribosylamino)methylideneamino] imidazole-4-carboxamide isomerase (246 aa).

D10 functions as the Proton acceptor in the catalytic mechanism. The active-site Proton donor is D135.

The protein belongs to the HisA/HisF family.

Its subcellular location is the cytoplasm. The enzyme catalyses 1-(5-phospho-beta-D-ribosyl)-5-[(5-phospho-beta-D-ribosylamino)methylideneamino]imidazole-4-carboxamide = 5-[(5-phospho-1-deoxy-D-ribulos-1-ylimino)methylamino]-1-(5-phospho-beta-D-ribosyl)imidazole-4-carboxamide. Its pathway is amino-acid biosynthesis; L-histidine biosynthesis; L-histidine from 5-phospho-alpha-D-ribose 1-diphosphate: step 4/9. This chain is 1-(5-phosphoribosyl)-5-[(5-phosphoribosylamino)methylideneamino] imidazole-4-carboxamide isomerase, found in Methanosarcina mazei (strain ATCC BAA-159 / DSM 3647 / Goe1 / Go1 / JCM 11833 / OCM 88) (Methanosarcina frisia).